The following is a 423-amino-acid chain: L-cysteine:1D-myo-inositol 2-amino-2-deoxy-alpha-D-glucopyranoside ligase (423 aa).

C45 provides a ligand contact to Zn(2+). L-cysteinyl-5'-AMP-binding positions include 45-48, T60, and 83-85; these read CGIT and NVT. The 'HIGH' region motif lies at 47–57; sequence ITPYDATHIGH. The 'ERGGDP' region motif lies at 197 to 202; that stretch reads DRGGDP. Residue W238 coordinates L-cysteinyl-5'-AMP. Zn(2+) is bound at residue C242. 260–262 provides a ligand contact to L-cysteinyl-5'-AMP; sequence GSD. H267 contacts Zn(2+). Position 294 (I294) interacts with L-cysteinyl-5'-AMP. The 'KMSKS' region motif lies at 300–304; it reads KMSKS.

It belongs to the class-I aminoacyl-tRNA synthetase family. MshC subfamily. In terms of assembly, monomer. It depends on Zn(2+) as a cofactor.

The catalysed reaction is 1D-myo-inositol 2-amino-2-deoxy-alpha-D-glucopyranoside + L-cysteine + ATP = 1D-myo-inositol 2-(L-cysteinylamino)-2-deoxy-alpha-D-glucopyranoside + AMP + diphosphate + H(+). Catalyzes the ATP-dependent condensation of GlcN-Ins and L-cysteine to form L-Cys-GlcN-Ins. The sequence is that of L-cysteine:1D-myo-inositol 2-amino-2-deoxy-alpha-D-glucopyranoside ligase from Jonesia denitrificans (strain ATCC 14870 / DSM 20603 / BCRC 15368 / CIP 55.134 / JCM 11481 / NBRC 15587 / NCTC 10816 / Prevot 55134) (Listeria denitrificans).